We begin with the raw amino-acid sequence, 230 residues long: MAASQRPSWSESKVAGVVQEGNREAPQDIKMALYKHGQLIPSLGDAKFRSPIISEIIEKKFEHYRNDKTLNIHGTLVFGTSSSLSGIMANLVFRNSFKVKYEALKTYASLTTLPVLATIVSYKLFVTDALQSGDISKESCVLRSALIGMACGVSYPSALAFYKNGRLAVKYQTVPLPPKGRVMLHWLLLCQTGMKAMAIPLFFQIVMGAFTGLHHYNICEKPRARLVPDD.

4 helical membrane passes run 70–92 (LNIH…ANLV), 107–126 (YASL…KLFV), 139–161 (SCVL…ALAF), and 196–218 (AMAI…HYNI).

The protein belongs to the TMEM126 family. Part of the mitochondrial complex I assembly/MCIA complex that comprises at least the core subunits TMEM126B, NDUFAF1, ECSIT and ACAD9 and complement subunits such as COA1 and TMEM186. Associates with the intermediate 370 kDa subcomplex of incompletely assembled complex I. Interacts with TMEM70.

Its subcellular location is the mitochondrion membrane. In terms of biological role, as part of the MCIA complex, involved in the assembly of the mitochondrial complex I. Participates in constructing the membrane arm of complex I. The chain is Complex I assembly factor TMEM126B, mitochondrial from Mus musculus (Mouse).